A 595-amino-acid polypeptide reads, in one-letter code: FERM domain-containing protein 3 (595 aa).

Residues Met-32 to Lys-312 enclose the FERM domain. A helical membrane pass occupies residues Leu-529 to Glu-549.

It is found in the membrane. Functionally, putative tumor suppressor gene that may be implicated in the origin and progression of lung cancer. The protein is FERM domain-containing protein 3 (Frmd3) of Mus musculus (Mouse).